The chain runs to 700 residues: Elongation factor G (700 aa).

One can recognise a tr-type G domain in the interval 10-286; sequence TKVRNIGIMA…AVIDYLPSPL (277 aa). Residues 19–26, 83–87, and 137–140 each bind GTP; these read AHIDAGKT, DTPGH, and NKMD.

This sequence belongs to the TRAFAC class translation factor GTPase superfamily. Classic translation factor GTPase family. EF-G/EF-2 subfamily.

Its subcellular location is the cytoplasm. In terms of biological role, catalyzes the GTP-dependent ribosomal translocation step during translation elongation. During this step, the ribosome changes from the pre-translocational (PRE) to the post-translocational (POST) state as the newly formed A-site-bound peptidyl-tRNA and P-site-bound deacylated tRNA move to the P and E sites, respectively. Catalyzes the coordinated movement of the two tRNA molecules, the mRNA and conformational changes in the ribosome. The protein is Elongation factor G of Kineococcus radiotolerans (strain ATCC BAA-149 / DSM 14245 / SRS30216).